The sequence spans 550 residues: Glucose-6-phosphate isomerase 1 (550 aa).

Residue glutamate 358 is the Proton donor of the active site. Active-site residues include histidine 389 and lysine 513.

It belongs to the GPI family.

Its subcellular location is the cytoplasm. The catalysed reaction is alpha-D-glucose 6-phosphate = beta-D-fructose 6-phosphate. It participates in carbohydrate biosynthesis; gluconeogenesis. It functions in the pathway carbohydrate degradation; glycolysis; D-glyceraldehyde 3-phosphate and glycerone phosphate from D-glucose: step 2/4. In terms of biological role, catalyzes the reversible isomerization of glucose-6-phosphate to fructose-6-phosphate. This chain is Glucose-6-phosphate isomerase 1, found in Streptomyces coelicolor (strain ATCC BAA-471 / A3(2) / M145).